The chain runs to 466 residues: Alpha-1A adrenergic receptor (466 aa).

At 1 to 27 the chain is on the extracellular side; it reads MVLLSENASEGSNCTHPPAPVNISKAI. Asparagine 7, asparagine 13, and asparagine 22 each carry an N-linked (GlcNAc...) asparagine glycan. A helical membrane pass occupies residues 28-51; it reads LLGVILGGLIIFGVLGNILVILSV. At 52 to 64 the chain is on the cytoplasmic side; that stretch reads ACHRHLHSVTHYY. Residues 65 to 88 form a helical membrane-spanning segment; sequence IVNLAVADLLLTSTVLPFSAIFEI. The Extracellular segment spans residues 89 to 99; that stretch reads LGYWAFGRVFC. A disulfide bond links cysteine 99 and cysteine 176. Residues 100-122 form a helical membrane-spanning segment; sequence NIWAAVDVLCCTASIMGLCIISI. The Cytoplasmic segment spans residues 123–143; that stretch reads DRYIGVSYPLRYPTIVTQRRG. The chain crosses the membrane as a helical span at residues 144-167; sequence VRALLCVWVLSLVISIGPLFGWRQ. Residues 168 to 181 are Extracellular-facing; it reads PAPEDETICQINEE. A helical transmembrane segment spans residues 182–205; it reads PGYVLFSALGSFYVPLAIILVMYC. At 206–273 the chain is on the cytoplasmic side; that stretch reads RVYVVAKRES…FSREKKAAKT (68 aa). Serine 215 carries the post-translational modification Phosphoserine; by PKA. The helical transmembrane segment at 274–297 threads the bilayer; the sequence is LGIVVGCFVLCWLPFFLVMPIGSF. The Extracellular portion of the chain corresponds to 298-305; it reads FPDFKPSE. A helical membrane pass occupies residues 306 to 329; sequence TVFKIVFWLGYLNSCINPIIYPCS. The Cytoplasmic segment spans residues 330–466; it reads SQEFKKAFQN…ISLGENGEEV (137 aa). A Nuclear localization signal motif is present at residues 334 to 349; sequence KKAFQNVLRIQCLRRR. Cysteine 345 carries S-palmitoyl cysteine lipidation.

The protein belongs to the G-protein coupled receptor 1 family. Adrenergic receptor subfamily. ADRA1A sub-subfamily. As to quaternary structure, homo- and heterooligomer. Heterooligomerizes with ADRA1B homooligomers in cardiac myocytes. Interacts with CAVIN4. C-terminal Ser or Thr residues may be phosphorylated. As to expression, abundant in heart, brain, aorta, vena cava, vas deferens, submaxillary gland, lung, and kidney. Found at lower levels in prostate, parotid gland and skeletal muscle.

The protein resides in the nucleus membrane. Its subcellular location is the cell membrane. The protein localises to the cytoplasm. It is found in the membrane. It localises to the caveola. In terms of biological role, this alpha-adrenergic receptor mediates its action by association with G proteins that activate a phosphatidylinositol-calcium second messenger system. Its effect is mediated by G(q) and G(11) proteins. Nuclear ADRA1A-ADRA1B heterooligomers regulate phenylephrine (PE)-stimulated ERK signaling in cardiac myocytes. In Rattus norvegicus (Rat), this protein is Alpha-1A adrenergic receptor (Adra1a).